A 424-amino-acid polypeptide reads, in one-letter code: Serine hydroxymethyltransferase (424 aa).

(6S)-5,6,7,8-tetrahydrofolate is bound by residues Leu118 and 122–124; that span reads GHL. Lys227 carries the N6-(pyridoxal phosphate)lysine modification. 351–353 lines the (6S)-5,6,7,8-tetrahydrofolate pocket; sequence SPF.

This sequence belongs to the SHMT family. As to quaternary structure, homodimer. Requires pyridoxal 5'-phosphate as cofactor.

Its subcellular location is the cytoplasm. It carries out the reaction (6R)-5,10-methylene-5,6,7,8-tetrahydrofolate + glycine + H2O = (6S)-5,6,7,8-tetrahydrofolate + L-serine. The protein operates within one-carbon metabolism; tetrahydrofolate interconversion. It participates in amino-acid biosynthesis; glycine biosynthesis; glycine from L-serine: step 1/1. Catalyzes the reversible interconversion of serine and glycine with tetrahydrofolate (THF) serving as the one-carbon carrier. This reaction serves as the major source of one-carbon groups required for the biosynthesis of purines, thymidylate, methionine, and other important biomolecules. Also exhibits THF-independent aldolase activity toward beta-hydroxyamino acids, producing glycine and aldehydes, via a retro-aldol mechanism. This is Serine hydroxymethyltransferase from Thermosipho melanesiensis (strain DSM 12029 / CIP 104789 / BI429).